The chain runs to 456 residues: RUN domain-containing protein 3B (456 aa).

A disordered region spans residues 1–24 (MASRSLGGLSGIRGGGGGGGKKSL). Over residues 8 to 21 (GLSGIRGGGGGGGK) the composition is skewed to gly residues. Arg13 is modified (omega-N-methylarginine). In terms of domain architecture, RUN spans 57–189 (DDSSPEFNNF…IDFSFCLKGE (133 aa)). Phosphoserine occurs at positions 215 and 216. Residues 216-237 (SDEEELRTLGSSGSESSTPENV) are disordered. The span at 224–235 (LGSSGSESSTPE) shows a compositional bias: polar residues. Residues 300–325 (AHKLEKEQLEYIIVELQDQLTVLKNN) adopt a coiled-coil conformation. Over residues 382-405 (SLSQTSLDPGQSQEGDGKQDTLNV) the composition is skewed to polar residues. Positions 382-411 (SLSQTSLDPGQSQEGDGKQDTLNVMSEGKE) are disordered.

This sequence belongs to the RUNDC3 family. Interacts with RAP2A.

The polypeptide is RUN domain-containing protein 3B (RUNDC3B) (Pongo abelii (Sumatran orangutan)).